Here is a 1387-residue protein sequence, read N- to C-terminus: Mediator of RNA polymerase II transcription subunit 13 (1387 aa).

Disordered regions lie at residues 81–102 (ELNN…PEFS), 354–400 (HSAN…ESYS), and 620–676 (SVNS…DIPM). Composition is skewed to polar residues over residues 354-367 (HSAN…STGE) and 390-400 (SRQNFPTESYS).

The protein belongs to the Mediator complex subunit 13 family. In terms of assembly, component of the SRB8-11 complex, which itself associates with the Mediator complex.

It localises to the nucleus. In terms of biological role, component of the SRB8-11 complex. The SRB8-11 complex is a regulatory module of the Mediator complex which is itself involved in regulation of basal and activated RNA polymerase II-dependent transcription. The SRB8-11 complex may be involved in the transcriptional repression of a subset of genes regulated by Mediator. It may inhibit the association of the Mediator complex with RNA polymerase II to form the holoenzyme complex. In Kluyveromyces lactis (strain ATCC 8585 / CBS 2359 / DSM 70799 / NBRC 1267 / NRRL Y-1140 / WM37) (Yeast), this protein is Mediator of RNA polymerase II transcription subunit 13 (SSN2).